Consider the following 898-residue polypeptide: Chloride channel protein 2 (898 aa).

Ala-2 bears the N-acetylalanine mark. Topologically, residues 2-87 (AAAAAEEGME…RCHKFLVSRV (86 aa)) are cytoplasmic. Residues 16 to 34 (QYEQTLMYGRYTQDLGAFA) form an essential for channel gating by both voltage and cell volume region. Thr-20 carries the post-translational modification Phosphothreonine. Residues 36 to 49 (EEAARIRLGGPEPW) are modulates channel gating by both voltage and cell volume. The next 2 membrane-spanning stretches (helical) occupy residues 88-121 (GEDW…AQQW) and 130-155 (ILLQ…TQIL). Residues 161-165 (GSGIP) carry the Selectivity filter part_1 motif. Residue Ser-162 coordinates chloride. Residues 164–171 (IPEMKTIL) constitute an intramembrane region (helical). Helical transmembrane passes span 180-198 (LTLK…ALGS) and 205-223 (EGPF…SKFL). The Selectivity filter part_2 motif lies at 203-207 (GKEGP). Intramembrane regions (helical) lie at residues 239 to 251 (MLAA…VGCC) and 255 to 263 (PIGGVLFSI). 5 helical membrane-spanning segments follow: residues 275-295 (YWRG…LAVW), 321-349 (LPAF…VQVM), 358-377 (FLMR…ISTL), 429-449 (ANVF…SALA), and 457-480 (GAFM…MAAW). Residues 457 to 461 (GAFMP) carry the Selectivity filter part_3 motif. Phe-459 serves as a coordination point for chloride. The segment at residues 497-511 (GGYAVVGAAALAGAV) is an intramembrane region (helical). An intramembrane region (note=Loop between two helices) is located at residues 512–513 (TH). An intramembrane region (helical) is located at residues 514–525 (TVSTAVIVFELT). Positions 526–530 (GQIAH) form an intramembrane region, note=Loop between two helices. Residues 531 to 548 (ILPVMIAVILANAVAQSL) traverse the membrane as a helical segment. The Cytoplasmic segment spans residues 549–898 (QPSLYDSIIR…SPSDSDDKCQ (350 aa)). Tyr-553 contacts chloride. The CBS 1 domain maps to 584-642 (MVRDVPHVALSCTFRDLRLALHRTKGRMLALVESPESMILLGSIERSQVVALLGAQLSP). Disordered regions lie at residues 643 to 672 (ARRR…PEAS) and 686 to 717 (AARG…TGSA). Over residues 705–717 (VTRNLGESPTGSA) the composition is skewed to polar residues. Phosphoserine occurs at positions 712 and 758. Positions 790-850 (IDPAPFQLVE…GSVTAQGVKV (61 aa)) constitute a CBS 2 domain. The Basolateral membrane sorting motif lies at 812–813 (LL). The disordered stretch occupies residues 856-898 (SFRDSATSSSDTETTEVHALWGPHSRHGLPREGSPSDSDDKCQ).

This sequence belongs to the chloride channel (TC 2.A.49) family. ClC-2/CLCN2 subfamily. As to quaternary structure, homodimer. Interacts with auxiliary subunit HEPACAM. Phosphorylated. Activated by dephosphorylation. In terms of tissue distribution, ubiquitously expressed. Moderately expressed in aortic and coronary vascular smooth muscle cells and expressed at a low level in aortic endothelial cells. Expressed in the adrenal gland, predominantly in the zona glomerulosa. Expressed in white mater perivascular astrocytes and ependymal cells (at protein level).

The protein localises to the cell membrane. Its subcellular location is the basolateral cell membrane. It is found in the cell projection. It localises to the dendritic spine membrane. The protein resides in the axon. The catalysed reaction is chloride(in) = chloride(out). It carries out the reaction thiocyanate(in) = thiocyanate(out). The enzyme catalyses bromide(in) = bromide(out). It catalyses the reaction nitrate(in) = nitrate(out). The catalysed reaction is iodide(out) = iodide(in). Its activity is regulated as follows. Common gate kinetics are down-regulated by intracellular ATP. Inhibited by AK-42, a derivative of meclofenamate. Inhibited by Cd(2+). Inhibited by Zn(2+) and PKC activation. Inhibited at acidic pH. CCLN2:HEPACAM channel conductance is up-regulated upon hypo-osmolarity. Functionally, voltage-gated and osmosensitive chloride channel. Forms a homodimeric channel where each subunit has its own ion conduction pathway. Conducts double-barreled currents controlled by two types of gates, two fast glutamate gates that control each subunit independently and a slow common gate that opens and shuts off both subunits simultaneously. Displays inward rectification currents activated upon membrane hyperpolarization and extracellular hypotonicity. Contributes to chloride conductance involved in neuron excitability. In hippocampal neurons, generates a significant part of resting membrane conductance and provides an additional chloride efflux pathway to prevent chloride accumulation in dendrites upon GABA receptor activation. In glia, associates with the auxiliary subunit HEPACAM/GlialCAM at astrocytic processes and myelinated fiber tracts where it may regulate transcellular chloride flux buffering extracellular chloride and potassium concentrations. Regulates aldosterone production in adrenal glands. The opening of CLCN2 channels at hyperpolarized membrane potentials in the glomerulosa causes cell membrane depolarization, activation of voltage-gated calcium channels and increased expression of aldosterone synthase, the rate-limiting enzyme for aldosterone biosynthesis. Contributes to chloride conductance in retinal pigment epithelium involved in phagocytosis of shed photoreceptor outer segments and photoreceptor renewal. Conducts chloride currents at the basolateral membrane of epithelial cells with a role in chloride reabsorption rather than secretion. Permeable to small monovalent anions with chloride &gt; thiocyanate &gt; bromide &gt; nitrate &gt; iodide ion selectivity. The sequence is that of Chloride channel protein 2 from Homo sapiens (Human).